A 91-amino-acid chain; its full sequence is MARMVHCIKLNKEAEGLDFPPLPGDLGKKIWQNVSKEAWAGWLKHQTMLINENRLNMADPRARQYLIKQTEKYFFGDGADQAAGYVPPPAA.

The protein belongs to the Fe(2+)-trafficking protein family.

Its function is as follows. Could be a mediator in iron transactions between iron acquisition and iron-requiring processes, such as synthesis and/or repair of Fe-S clusters in biosynthetic enzymes. The sequence is that of Probable Fe(2+)-trafficking protein from Cupriavidus metallidurans (strain ATCC 43123 / DSM 2839 / NBRC 102507 / CH34) (Ralstonia metallidurans).